A 570-amino-acid polypeptide reads, in one-letter code: Proline--tRNA ligase (570 aa).

The protein belongs to the class-II aminoacyl-tRNA synthetase family. ProS type 1 subfamily. In terms of assembly, homodimer.

It is found in the cytoplasm. It catalyses the reaction tRNA(Pro) + L-proline + ATP = L-prolyl-tRNA(Pro) + AMP + diphosphate. Catalyzes the attachment of proline to tRNA(Pro) in a two-step reaction: proline is first activated by ATP to form Pro-AMP and then transferred to the acceptor end of tRNA(Pro). As ProRS can inadvertently accommodate and process non-cognate amino acids such as alanine and cysteine, to avoid such errors it has two additional distinct editing activities against alanine. One activity is designated as 'pretransfer' editing and involves the tRNA(Pro)-independent hydrolysis of activated Ala-AMP. The other activity is designated 'posttransfer' editing and involves deacylation of mischarged Ala-tRNA(Pro). The misacylated Cys-tRNA(Pro) is not edited by ProRS. The chain is Proline--tRNA ligase from Clostridium perfringens (strain ATCC 13124 / DSM 756 / JCM 1290 / NCIMB 6125 / NCTC 8237 / Type A).